The primary structure comprises 308 residues: Protoheme IX farnesyltransferase (308 aa).

9 consecutive transmembrane segments (helical) span residues 31 to 51 (VGIV…AFYF), 60 to 80 (LDIV…SCVI), 110 to 130 (ALWF…MTNL), 131 to 151 (TAAG…TMWS), 157 to 177 (VNTI…WTAV), 185 to 205 (AWVL…ALAI), 232 to 252 (IIIW…LGLP), 253 to 273 (IVIL…VGYR), and 285 to 305 (FVYS…FTLF).

This sequence belongs to the UbiA prenyltransferase family. Protoheme IX farnesyltransferase subfamily. As to quaternary structure, interacts with CtaA.

It localises to the cell membrane. It carries out the reaction heme b + (2E,6E)-farnesyl diphosphate + H2O = Fe(II)-heme o + diphosphate. It participates in porphyrin-containing compound metabolism; heme O biosynthesis; heme O from protoheme: step 1/1. Converts heme B (protoheme IX) to heme O by substitution of the vinyl group on carbon 2 of heme B porphyrin ring with a hydroxyethyl farnesyl side group. The sequence is that of Protoheme IX farnesyltransferase from Bacillus licheniformis (strain ATCC 14580 / DSM 13 / JCM 2505 / CCUG 7422 / NBRC 12200 / NCIMB 9375 / NCTC 10341 / NRRL NRS-1264 / Gibson 46).